Consider the following 223-residue polypeptide: UPF0441 protein YgiB (223 aa).

Residues Thr-178–Thr-195 are compositionally biased toward low complexity. The interval Thr-178–Gly-223 is disordered. The span at Ala-204–Gly-223 shows a compositional bias: polar residues.

This sequence belongs to the UPF0441 family.

In Salmonella paratyphi B (strain ATCC BAA-1250 / SPB7), this protein is UPF0441 protein YgiB.